A 147-amino-acid chain; its full sequence is Bis(5'-nucleosyl)-tetraphosphatase [asymmetrical] (147 aa).

N-acetylalanine is present on A2. The region spanning 2 to 139 (ALRACGLIIF…EMKATLQEGH (138 aa)) is the Nudix hydrolase domain. The Nudix box signature appears at 43–64 (GHVDPGENDLETALRETQEETG).

The protein belongs to the Nudix hydrolase family. Requires a divalent metal cation as cofactor.

The enzyme catalyses P(1),P(4)-bis(5'-guanosyl) tetraphosphate + H2O = GMP + GTP + 2 H(+). It catalyses the reaction a 5'-end CoA-ribonucleoside in mRNA + H2O = a 5'-end phospho-adenosine-phospho-ribonucleoside in mRNA + (R)-4'-phosphopantetheine + 2 H(+). The catalysed reaction is a 5'-end FAD-phospho-ribonucleoside in mRNA + H2O = a 5'-end phospho-adenosine-phospho-ribonucleoside in mRNA + FMN + 2 H(+). Its function is as follows. Catalyzes the asymmetric hydrolysis of diadenosine 5',5'''-P1,P4-tetraphosphate (Ap4A) to yield AMP and ATP. Exhibits decapping activity towards FAD-capped RNAs and dpCoA-capped RNAs in vitro. This chain is Bis(5'-nucleosyl)-tetraphosphatase [asymmetrical] (Nudt2), found in Rattus norvegicus (Rat).